The chain runs to 191 residues: Small ribosomal subunit protein uS11m (191 aa).

The disordered stretch occupies residues 37–62 (PRLEDSAARQNTEREAAPSRFSLYPP). The span at 38–53 (RLEDSAARQNTEREAA) shows a compositional bias: basic and acidic residues.

This sequence belongs to the universal ribosomal protein uS11 family. As to quaternary structure, component of the mitochondrial ribosome small subunit (28S) which comprises a 12S rRNA and about 30 distinct proteins.

It is found in the mitochondrion. This chain is Small ribosomal subunit protein uS11m (Mrps11), found in Mus musculus (Mouse).